The sequence spans 268 residues: Purine nucleoside phosphorylase (268 aa).

Residues Ser-36, His-68, Arg-88–His-90, and Ala-120 each bind phosphate. Glu-189 lines the a purine D-ribonucleoside pocket. Residue Ser-208 coordinates phosphate. Asn-231 contacts a purine D-ribonucleoside.

This sequence belongs to the PNP/MTAP phosphorylase family. In terms of assembly, homotrimer.

It catalyses the reaction a purine 2'-deoxy-D-ribonucleoside + phosphate = a purine nucleobase + 2-deoxy-alpha-D-ribose 1-phosphate. It functions in the pathway purine metabolism; purine nucleoside salvage. Functionally, the purine nucleoside phosphorylases catalyze the phosphorolytic breakdown of the N-glycosidic bond in the beta-(deoxy)ribonucleoside molecules, with the formation of the corresponding free purine bases and pentose-1-phosphate. Cleaves guanosine, inosine, 2'-deoxyguanosine and 2'-deoxyinosine. The chain is Purine nucleoside phosphorylase (punA) from Mycobacterium bovis (strain ATCC BAA-935 / AF2122/97).